Reading from the N-terminus, the 460-residue chain is Asparagine--tRNA ligase (460 aa).

This sequence belongs to the class-II aminoacyl-tRNA synthetase family. In terms of assembly, homodimer.

Its subcellular location is the cytoplasm. The catalysed reaction is tRNA(Asn) + L-asparagine + ATP = L-asparaginyl-tRNA(Asn) + AMP + diphosphate + H(+). The polypeptide is Asparagine--tRNA ligase (Picosynechococcus sp. (strain ATCC 27264 / PCC 7002 / PR-6) (Agmenellum quadruplicatum)).